The sequence spans 406 residues: Proteasome-activating nucleotidase 1 (406 aa).

Residues 1–12 show a composition bias toward acidic residues; sequence MTDTVEDVELPY. The tract at residues 1 to 20 is disordered; the sequence is MTDTVEDVELPYDDSASQQD. The stretch at 12 to 70 forms a coiled coil; sequence YDDSASQQDKLEALEEQLSTLEEENEEMRDRLLDANAENNKYQQKLERLSHENKKLKQS. ATP-binding positions include 192–197 and histidine 331; that span reads GTGKTL. Residues 385 to 406 form a disordered region; sequence AREKLDQDSEPAAATDVSRTFA. The tract at residues 404–406 is docks into pockets in the proteasome alpha-ring to cause gate opening; it reads TFA.

The protein belongs to the AAA ATPase family. In terms of assembly, homohexamer. The hexameric complex has a two-ring architecture resembling a top hat that caps the 20S proteasome core at one or both ends. Upon ATP-binding, the C-terminus of PAN interacts with the alpha-rings of the proteasome core by binding to the intersubunit pockets.

The protein localises to the cytoplasm. In terms of biological role, ATPase which is responsible for recognizing, binding, unfolding and translocation of substrate proteins into the archaeal 20S proteasome core particle. Is essential for opening the gate of the 20S proteasome via an interaction with its C-terminus, thereby allowing substrate entry and access to the site of proteolysis. Thus, the C-termini of the proteasomal ATPase function like a 'key in a lock' to induce gate opening and therefore regulate proteolysis. Unfolding activity requires energy from ATP hydrolysis, whereas ATP binding alone promotes ATPase-20S proteasome association which triggers gate opening, and supports translocation of unfolded substrates. The protein is Proteasome-activating nucleotidase 1 of Halobacterium salinarum (strain ATCC 700922 / JCM 11081 / NRC-1) (Halobacterium halobium).